A 529-amino-acid chain; its full sequence is Cytochrome P450 monooxygenase acuD (529 aa).

A helical membrane pass occupies residues 8–28 (FAVIAASAAAVAGVLFLIYAA). N81 is a glycosylation site (N-linked (GlcNAc...) asparagine). A heme-binding site is contributed by C449.

Belongs to the cytochrome P450 family. It depends on heme as a cofactor.

It localises to the endoplasmic reticulum membrane. It catalyses the reaction 3-hydroxybenzyl alcohol + reduced [NADPH--hemoprotein reductase] + O2 = gentisyl alcohol + oxidized [NADPH--hemoprotein reductase] + H2O + H(+). The protein operates within secondary metabolite biosynthesis. Functionally, cytochrome P450 monooxygenase; part of the gene cluster that mediates the biosynthesis of aculins. The pathway begins with the synthesis of 6-methylsalicylic acid by the polyketide synthase (PKS) acuA via condensation of acetate and malonate units. The 6-methylsalicylic acid decarboxylase acuB then catalyzes the decarboxylation of 6-methylsalicylic acid to yield m-cresol (also known as 3-methylphenol). These first reactions occur in the cytosol. The intermediate m-cresol is then transported into the endoplasmic reticulum where the cytochrome P450 monooxygenase acuC converts it to m-hydroxybenzyl alcohol, which is further converted to gentisyl alcohol by the cytochrome P450 monooxygenase acuD. Gentisyl alcohol is further oxidized by the oxidoreductase acuE that probably catalyzes hydroxylation of the aromatic ring. The aromatic system might then be opened by oxidation through a Baeyer-Villiger type of oxidation, which could be catalyzed by acuF, with the carboxylic acid at C-1 subsequently reduced to an aldehyde by acuG. Subsequently, a hemiacetal is formed, before the dehydrogenase acuH would reduce the double bond between C-4 and C-6. Finally, keto-enol tautomerism results in formation of aculinic acid, which exists as two diastereomers (both R/S configurations at C-1) by non-enzymatic hemiacetal formation. The carboxypeptidase acuI could be involved in the linking of aculinic acid to an aculene A moiety produced by the aculene biosynthesis cluster and which leads to the production of aculin A. AcuI may also be involved in the attachment of proline to aculinic acid to form epi-aculins A and B. The chain is Cytochrome P450 monooxygenase acuD from Aspergillus aculeatus (strain ATCC 16872 / CBS 172.66 / WB 5094).